The sequence spans 372 residues: DNA/RNA-binding protein ALBA4 (372 aa).

The protein belongs to the histone-like Alba family. As to quaternary structure, identified in a TARE6-associated complex consisting of over 30 proteins and including ALBA1, ALBA2 and ALBA4; the complex binds to the non-coding subtelomeric repeat region TARE6.

The protein resides in the nucleus. It is found in the chromosome. It localises to the telomere. Its subcellular location is the cytoplasm. Possesses DNA- and RNA-binding activities. Binds to DNA fragments longer than 14 base pairs with relaxed sequence specificity. Associates with the subtelomeric TARE6 repeats. Regulates the abundance of transcript sub-populations in a stage-specific manner. Regulates activation of male gametocytes. Participates in the coordination of sporozoite development in the oocyst. In Plasmodium falciparum (isolate 3D7), this protein is DNA/RNA-binding protein ALBA4.